The sequence spans 59 residues: Small ribosomal subunit protein bS21 (59 aa).

A disordered region spans residues 39 to 59 (ETPVEKYKRKQRLKNRTKRRR). Residues 45-59 (YKRKQRLKNRTKRRR) are compositionally biased toward basic residues.

Belongs to the bacterial ribosomal protein bS21 family.

This Prochlorococcus marinus (strain SARG / CCMP1375 / SS120) protein is Small ribosomal subunit protein bS21.